A 123-amino-acid polypeptide reads, in one-letter code: Ribosome-binding factor A (123 aa).

Belongs to the RbfA family. Monomer. Binds 30S ribosomal subunits, but not 50S ribosomal subunits or 70S ribosomes.

It is found in the cytoplasm. In terms of biological role, one of several proteins that assist in the late maturation steps of the functional core of the 30S ribosomal subunit. Associates with free 30S ribosomal subunits (but not with 30S subunits that are part of 70S ribosomes or polysomes). Required for efficient processing of 16S rRNA. May interact with the 5'-terminal helix region of 16S rRNA. The protein is Ribosome-binding factor A of Neisseria meningitidis serogroup B (strain ATCC BAA-335 / MC58).